Reading from the N-terminus, the 247-residue chain is 3-oxoacyl-[acyl-carrier-protein] reductase MabA (247 aa).

NADP(+) is bound by residues 25-27 (RGI), R47, 61-62 (DV), G90, Y153, K157, I186, and R197. Residue Y153 is the Proton acceptor of the active site.

The protein belongs to the short-chain dehydrogenases/reductases (SDR) family. As to quaternary structure, homotetramer.

It is found in the secreted. Its subcellular location is the cell wall. The catalysed reaction is a (3R)-hydroxyacyl-[ACP] + NADP(+) = a 3-oxoacyl-[ACP] + NADPH + H(+). It functions in the pathway lipid metabolism; mycolic acid biosynthesis. Part of the mycobacterial fatty acid elongation system FAS-II, which is involved in mycolic acid biosynthesis. Catalyzes the NADPH-dependent reduction of beta-ketoacyl derivatives, the second step of the FAS-II elongation cycle. In Mycobacterium bovis (strain ATCC BAA-935 / AF2122/97), this protein is 3-oxoacyl-[acyl-carrier-protein] reductase MabA.